Reading from the N-terminus, the 302-residue chain is UTP--glucose-1-phosphate uridylyltransferase (302 aa).

It belongs to the UDPGP type 2 family. Homotetramer or homopentamer. Requires Mg(2+) as cofactor.

The enzyme catalyses alpha-D-glucose 1-phosphate + UTP + H(+) = UDP-alpha-D-glucose + diphosphate. In terms of biological role, may play a role in stationary phase survival. In Escherichia coli O157:H7, this protein is UTP--glucose-1-phosphate uridylyltransferase (galU).